We begin with the raw amino-acid sequence, 565 residues long: MGDLLSNSEFFKKLGVDSSNQWILYDEQMEMFFKFLSGNITDANILTERQVLEREEMQRRGEWLSASDRELKLLQIEAESPGLLNYKQQDVDALTMSIEAIEDASRDYATLLEDMMTTKHSITKHLGEVECVTAELQLREKDLIAECQSKAKQLEELQQENCRLSAEAKKAFTAPQLPPLFMHQLPLEQYFHKCDSFMQYFTLYVKENFKIQDYDEFQSAEEDLGREKAKLEDLERGIQFYALSYIRTKAKVKATQCLIDQLDLGKIHCLSLTDMAREMHDLQLLNDYQLSNTHDTLLNDLTIHIQQHTQRRIELVLYENTKLKLERAVRRHESDKKLTKIISDALSNAELLWIAIQLDCDKKRNCLDTSEELRDQAQATWQRIQTMRSINASYQGICAQFVQEIANLLSAHLGQNIKATEAKACLFEYEKFGRLLSYSFQSMLNRKSCAAVQDQLAELKRLEQTLRPFVYDSPLEQPMFENVRYLSAIYNVTQQQTRLDESGRSLRKDFLENVVGRIERDKLYRYSVVLWIWFLTEPQRMMHAIDEVKKAAAAVIRPGGGLHRK.

2 coiled-coil regions span residues 135–171 (ELQL…AKKA) and 212–241 (QDYD…IQFY).

Belongs to the HAUS3 family. In terms of assembly, component of the augmin complex composed of dgt2, dgt3, dgt4, dgt5, dgt6, msd1, msd5 and wac. The complex interacts directly or indirectly with microtubules and is required for centrosome-independent generation of spindle microtubules.

Its subcellular location is the cytoplasm. The protein localises to the cytoskeleton. It is found in the spindle. As part of the augmin complex, plays a role in centrosome-independent generation of spindle microtubules. The complex is required for mitotic spindle assembly through its involvement in localizing gamma-tubulin to spindle microtubules. The chain is Augmin complex subunit dgt3 from Drosophila melanogaster (Fruit fly).